A 329-amino-acid chain; its full sequence is Oligopeptide transport ATP-binding protein AppF (329 aa).

Residues 10–261 (LELRDVKKYF…PLHPYTQALL (252 aa)) enclose the ABC transporter domain. 53–60 (GESGCGKS) lines the ATP pocket.

The protein belongs to the ABC transporter superfamily.

The protein localises to the cell membrane. Its function is as follows. This protein is a component of an oligopeptide permease, a binding protein-dependent transport system. This APP system can completely substitute for the OPP system in both sporulation and genetic competence, though, unlike OPP, is incapable of transporting tripeptides. Probably responsible for energy coupling to the transport system. The sequence is that of Oligopeptide transport ATP-binding protein AppF (appF) from Bacillus subtilis (strain 168).